The chain runs to 393 residues: NAD(P)H-quinone oxidoreductase subunit H, chloroplastic (393 aa).

The protein belongs to the complex I 49 kDa subunit family. In terms of assembly, NDH is composed of at least 16 different subunits, 5 of which are encoded in the nucleus.

It is found in the plastid. It localises to the chloroplast thylakoid membrane. It carries out the reaction a plastoquinone + NADH + (n+1) H(+)(in) = a plastoquinol + NAD(+) + n H(+)(out). The enzyme catalyses a plastoquinone + NADPH + (n+1) H(+)(in) = a plastoquinol + NADP(+) + n H(+)(out). Functionally, NDH shuttles electrons from NAD(P)H:plastoquinone, via FMN and iron-sulfur (Fe-S) centers, to quinones in the photosynthetic chain and possibly in a chloroplast respiratory chain. The immediate electron acceptor for the enzyme in this species is believed to be plastoquinone. Couples the redox reaction to proton translocation, and thus conserves the redox energy in a proton gradient. The sequence is that of NAD(P)H-quinone oxidoreductase subunit H, chloroplastic from Morus indica (Mulberry).